Reading from the N-terminus, the 441-residue chain is 5-hydroxytryptamine receptor 3B (441 aa).

The first 21 residues, 1-21, serve as a signal peptide directing secretion; that stretch reads MLSSVMAPLWACILVAAGILA. Residues 22–238 are Extracellular-facing; it reads TDTHHPQDSA…IQFNVVMRRH (217 aa). N-linked (GlcNAc...) asparagine glycans are attached at residues Asn52, Asn96, Asn138, Asn168, and Asn203. Cys155 and Cys169 are oxidised to a cystine. A helical transmembrane segment spans residues 239-259; it reads PLVYVVSLLIPSIFLMLVDLG. Topologically, residues 260–268 are cytoplasmic; sequence SFYLPPNCR. The helical transmembrane segment at 269 to 286 threads the bilayer; that stretch reads ARIVFKTSVLVGYTVFRV. Asn287 carries N-linked (GlcNAc...) asparagine glycosylation. At 287 to 303 the chain is on the extracellular side; that stretch reads NMSNQVPRSVGSTPLIG. The helical transmembrane segment at 304 to 324 threads the bilayer; sequence HFFTICMAFLVLSLAKSIVLV. The Cytoplasmic segment spans residues 325–414; the sequence is KFLHDEQRGG…WLVLLSRFDR (90 aa). Residues 381–413 are HA-stretch; determines single-channel conductance in 5-HT3 receptors; it reads VWSQLQSISNYLQTQDQTDQQEAEWLVLLSRFD. The chain crosses the membrane as a helical span at residues 415-435; that stretch reads LLFQSYLFMLGIYTITLCSLW. Over 436 to 441 the chain is Extracellular; the sequence is ALWGGV.

This sequence belongs to the ligand-gated ion channel (TC 1.A.9) family. 5-hydroxytryptamine receptor (TC 1.A.9.2) subfamily. HTR3B sub-subfamily. In terms of assembly, forms homopentameric as well as heteropentameric serotonin-activated cation-selective channel complexes with HTR3A. The homomeric complex is not functional. Heteropentameric complexes display properties which resemble that of neuronal serotonin-activated channels in vivo. N-glycosylation required for membrane localization. As to expression, expressed in the brain cortex, in the caudate nucleus, the hippocampus, the thalamus and the amygdala. Detected in the kidney and testis as well as in monocytes of the spleen, small and large intestine, uterus, prostate, ovary and placenta.

It localises to the postsynaptic cell membrane. It is found in the cell membrane. It carries out the reaction Na(+)(in) = Na(+)(out). The catalysed reaction is K(+)(in) = K(+)(out). It catalyses the reaction Ca(2+)(in) = Ca(2+)(out). Forms serotonin (5-hydroxytryptamine/5-HT3)-activated cation-selective channel complexes, which when activated cause fast, depolarizing responses in neurons. The sequence is that of 5-hydroxytryptamine receptor 3B from Homo sapiens (Human).